We begin with the raw amino-acid sequence, 414 residues long: Glucose-1-phosphate adenylyltransferase (414 aa).

Residues Tyr103, Gly168, 183-184 (EK), and Ser201 each bind alpha-D-glucose 1-phosphate.

It belongs to the bacterial/plant glucose-1-phosphate adenylyltransferase family. As to quaternary structure, homotetramer.

The enzyme catalyses alpha-D-glucose 1-phosphate + ATP + H(+) = ADP-alpha-D-glucose + diphosphate. It participates in glycan biosynthesis; glycogen biosynthesis. Functionally, involved in the biosynthesis of ADP-glucose, a building block required for the elongation reactions to produce glycogen. Catalyzes the reaction between ATP and alpha-D-glucose 1-phosphate (G1P) to produce pyrophosphate and ADP-Glc. The polypeptide is Glucose-1-phosphate adenylyltransferase (Thermus thermophilus (strain ATCC 27634 / DSM 579 / HB8)).